The following is a 211-amino-acid chain: Pyridoxine/pyridoxamine 5'-phosphate oxidase (211 aa).

Residues 7–10 (RREY) and lysine 65 each bind substrate. Residues 60–65 (RIVLLK), 75–76 (YT), arginine 81, lysine 82, and glutamine 104 contribute to the FMN site. Tyrosine 122, arginine 126, and serine 130 together coordinate substrate. Residues 139-140 (QS) and tryptophan 184 each bind FMN. 190 to 192 (RLH) is a binding site for substrate. Arginine 194 lines the FMN pocket.

Belongs to the pyridoxamine 5'-phosphate oxidase family. As to quaternary structure, homodimer. Requires FMN as cofactor.

The enzyme catalyses pyridoxamine 5'-phosphate + O2 + H2O = pyridoxal 5'-phosphate + H2O2 + NH4(+). It catalyses the reaction pyridoxine 5'-phosphate + O2 = pyridoxal 5'-phosphate + H2O2. It participates in cofactor metabolism; pyridoxal 5'-phosphate salvage; pyridoxal 5'-phosphate from pyridoxamine 5'-phosphate: step 1/1. It functions in the pathway cofactor metabolism; pyridoxal 5'-phosphate salvage; pyridoxal 5'-phosphate from pyridoxine 5'-phosphate: step 1/1. Catalyzes the oxidation of either pyridoxine 5'-phosphate (PNP) or pyridoxamine 5'-phosphate (PMP) into pyridoxal 5'-phosphate (PLP). The chain is Pyridoxine/pyridoxamine 5'-phosphate oxidase from Vibrio vulnificus (strain CMCP6).